We begin with the raw amino-acid sequence, 130 residues long: Large ribosomal subunit protein bL20 (130 aa).

The protein belongs to the bacterial ribosomal protein bL20 family.

In terms of biological role, binds directly to 23S ribosomal RNA and is necessary for the in vitro assembly process of the 50S ribosomal subunit. It is not involved in the protein synthesizing functions of that subunit. The polypeptide is Large ribosomal subunit protein bL20 (Solibacter usitatus (strain Ellin6076)).